A 406-amino-acid polypeptide reads, in one-letter code: Multifunctional CCA protein (406 aa).

Residues G8 and R11 each contribute to the ATP site. CTP-binding residues include G8 and R11. D21 and D23 together coordinate Mg(2+). ATP is bound by residues R91, R137, and R140. Residues R91, R137, and R140 each coordinate CTP. The region spanning 228–329 (TGIHTLMVAE…IKILNKFDVW (102 aa)) is the HD domain.

The protein belongs to the tRNA nucleotidyltransferase/poly(A) polymerase family. Bacterial CCA-adding enzyme type 1 subfamily. As to quaternary structure, monomer. Can also form homodimers and oligomers. Requires Mg(2+) as cofactor. Ni(2+) is required as a cofactor.

It carries out the reaction a tRNA precursor + 2 CTP + ATP = a tRNA with a 3' CCA end + 3 diphosphate. It catalyses the reaction a tRNA with a 3' CCA end + 2 CTP + ATP = a tRNA with a 3' CCACCA end + 3 diphosphate. Functionally, catalyzes the addition and repair of the essential 3'-terminal CCA sequence in tRNAs without using a nucleic acid template. Adds these three nucleotides in the order of C, C, and A to the tRNA nucleotide-73, using CTP and ATP as substrates and producing inorganic pyrophosphate. tRNA 3'-terminal CCA addition is required both for tRNA processing and repair. Also involved in tRNA surveillance by mediating tandem CCA addition to generate a CCACCA at the 3' terminus of unstable tRNAs. While stable tRNAs receive only 3'-terminal CCA, unstable tRNAs are marked with CCACCA and rapidly degraded. The protein is Multifunctional CCA protein of Vibrio parahaemolyticus serotype O3:K6 (strain RIMD 2210633).